We begin with the raw amino-acid sequence, 503 residues long: ATP synthase subunit beta (503 aa).

ATP is bound at residue 157–164; it reads GGAGVGKT.

It belongs to the ATPase alpha/beta chains family. As to quaternary structure, F-type ATPases have 2 components, CF(1) - the catalytic core - and CF(0) - the membrane proton channel. CF(1) has five subunits: alpha(3), beta(3), gamma(1), delta(1), epsilon(1). CF(0) has three main subunits: a(1), b(2) and c(9-12). The alpha and beta chains form an alternating ring which encloses part of the gamma chain. CF(1) is attached to CF(0) by a central stalk formed by the gamma and epsilon chains, while a peripheral stalk is formed by the delta and b chains.

The protein localises to the cell membrane. It carries out the reaction ATP + H2O + 4 H(+)(in) = ADP + phosphate + 5 H(+)(out). Functionally, produces ATP from ADP in the presence of a proton gradient across the membrane. The catalytic sites are hosted primarily by the beta subunits. The protein is ATP synthase subunit beta of Christiangramia forsetii (strain DSM 17595 / CGMCC 1.15422 / KT0803) (Gramella forsetii).